A 412-amino-acid polypeptide reads, in one-letter code: uncharacterized protein (412 aa).

The span at 1-17 (MPSQGNNKNSENITQNP) shows a compositional bias: polar residues. Disordered regions lie at residues 1–20 (MPSQ…PIEG), 223–243 (EQAV…ARQT), and 310–412 (QKQM…NPVA). The span at 340-355 (KLNSNTRGSSKRPSVN) shows a compositional bias: polar residues. Residues 361–379 (GQRGRGGRGFYRGGRGRGG) show a composition bias toward gly residues. Low complexity predominate over residues 390-402 (SNSNNSTSQPSPN). Positions 403–412 (AELSNFNPVA) are enriched in polar residues.

This is an uncharacterized protein from Schizosaccharomyces pombe (strain 972 / ATCC 24843) (Fission yeast).